A 578-amino-acid chain; its full sequence is Zinc finger-containing ubiquitin peptidase 1 (578 aa).

The C2H2-type 1 zinc-finger motif lies at 2–24 (LSCNICGETVTSEPDMKAHLIVH). The segment at 29–52 (IICPFCKLSGVNYDEMCFHIETAH) adopts a C2H2-type 2; atypical zinc-finger fold. 2 consecutive C2H2-type zinc fingers follow at residues 154–177 (PECP…KTKH) and 193–215 (YDCP…VDLH). Positions 226–248 (DRVQCSGDLQLAHQLQQEEDRKR) are MIU. Residues 249–274 (RSEESRQEIEEFQKLQRQYGLDNSGG) form a zUBD/ZHA region. N6-acetyllysine is present on lysine 262. The Nucleophile role is filled by cysteine 360. Histidine 491 (proton acceptor) is an active-site residue. The active site involves aspartate 512.

Belongs to the peptidase C78 family. ZUFSP subfamily. Interacts with RPA1 and RPA2.

It is found in the cytoplasm. Its subcellular location is the nucleus. It carries out the reaction Thiol-dependent hydrolysis of ester, thioester, amide, peptide and isopeptide bonds formed by the C-terminal Gly of ubiquitin (a 76-residue protein attached to proteins as an intracellular targeting signal).. In terms of biological role, deubiquitinase with endodeubiquitinase activity that specifically interacts with and cleaves 'Lys-63'-linked long polyubiquitin chains. Shows only weak activity against 'Lys-11' and 'Lys-48'-linked chains. Plays an important role in genome stability pathways, functioning to prevent spontaneous DNA damage and also promote cellular survival in response to exogenous DNA damage. Modulates the ubiquitination status of replication protein A (RPA) complex proteins in response to replication stress. The protein is Zinc finger-containing ubiquitin peptidase 1 of Homo sapiens (Human).